The following is a 611-amino-acid chain: Elongation factor 4 1 (611 aa).

The region spanning 11 to 193 (QHIRNFSIVA…QIVHKIPAPQ (183 aa)) is the tr-type G domain. GTP-binding positions include 23 to 28 (DHGKST) and 140 to 143 (NKID).

The protein belongs to the TRAFAC class translation factor GTPase superfamily. Classic translation factor GTPase family. LepA subfamily.

It is found in the cell membrane. It catalyses the reaction GTP + H2O = GDP + phosphate + H(+). Required for accurate and efficient protein synthesis under certain stress conditions. May act as a fidelity factor of the translation reaction, by catalyzing a one-codon backward translocation of tRNAs on improperly translocated ribosomes. Back-translocation proceeds from a post-translocation (POST) complex to a pre-translocation (PRE) complex, thus giving elongation factor G a second chance to translocate the tRNAs correctly. Binds to ribosomes in a GTP-dependent manner. In Lactiplantibacillus plantarum (strain ATCC BAA-793 / NCIMB 8826 / WCFS1) (Lactobacillus plantarum), this protein is Elongation factor 4 1.